The chain runs to 494 residues: 4-trimethylaminobutyraldehyde dehydrogenase (494 aa).

Serine 2 carries the post-translational modification N-acetylserine. Position 30 is an N6-acetyllysine; alternate (lysine 30). At lysine 30 the chain carries N6-succinyllysine; alternate. Position 59 is an N6-succinyllysine (lysine 59). Residues lysine 180 and 232–236 (GSVPT) each bind NAD(+). Glutamate 254 functions as the Proton acceptor in the catalytic mechanism. Cysteine 288 functions as the Nucleophile in the catalytic mechanism. An N6-acetyllysine modification is found at lysine 298. Position 303 is an N6-acetyllysine; alternate (lysine 303). The residue at position 303 (lysine 303) is an N6-succinyllysine; alternate. Lysine 344 carries the post-translational modification N6-acetyllysine. Glutamate 391 is a binding site for NAD(+).

It belongs to the aldehyde dehydrogenase family. In terms of assembly, homotetramer.

It is found in the cytoplasm. It localises to the cytosol. It catalyses the reaction 4-(trimethylamino)butanal + NAD(+) + H2O = 4-(trimethylamino)butanoate + NADH + 2 H(+). It carries out the reaction an aldehyde + NAD(+) + H2O = a carboxylate + NADH + 2 H(+). The catalysed reaction is 4-aminobutanal + NAD(+) + H2O = 4-aminobutanoate + NADH + 2 H(+). The enzyme catalyses formaldehyde + NAD(+) + H2O = formate + NADH + 2 H(+). It catalyses the reaction acetaldehyde + NAD(+) + H2O = acetate + NADH + 2 H(+). It carries out the reaction imidazole-4-acetaldehyde + NAD(+) + H2O = imidazole-4-acetate + NADH + 2 H(+). The catalysed reaction is acrolein + NAD(+) + H2O = acrylate + NADH + 2 H(+). The enzyme catalyses (5-hydroxyindol-3-yl)acetaldehyde + NAD(+) + H2O = (5-hydroxyindol-3-yl)acetate + NADH + 2 H(+). It catalyses the reaction 3,4-dihydroxyphenylacetaldehyde + NAD(+) + H2O = 3,4-dihydroxyphenylacetate + NADH + 2 H(+). It carries out the reaction spermine monoaldehyde + NAD(+) + H2O = N-(2-carboxyethyl)spermidine + NADH + 2 H(+). The catalysed reaction is propanal + NAD(+) + H2O = propanoate + NADH + 2 H(+). The enzyme catalyses butanal + NAD(+) + H2O = butanoate + NADH + 2 H(+). It catalyses the reaction pentanal + NAD(+) + H2O = pentanoate + NADH + 2 H(+). It carries out the reaction hexanal + NAD(+) + H2O = hexanoate + NADH + 2 H(+). It functions in the pathway amine and polyamine biosynthesis; carnitine biosynthesis. Its function is as follows. Converts gamma-trimethylaminobutyraldehyde into gamma-butyrobetaine with high efficiency (in vitro). Can catalyze the irreversible oxidation of a broad range of aldehydes to the corresponding acids in an NAD-dependent reaction, but with low efficiency. Catalyzes the oxidation of aldehydes arising from biogenic amines and polyamines. This is 4-trimethylaminobutyraldehyde dehydrogenase (ALDH9A1) from Sus scrofa (Pig).